Consider the following 609-residue polypeptide: Putative pectinesterase/pectinesterase inhibitor 45 (609 aa).

A helical membrane pass occupies residues 25 to 45 (IILGVVSVLVVAAAIIGGAFA). 10 N-linked (GlcNAc...) asparagine glycosylation sites follow: Asn51, Asn62, Asn100, Asn114, Asn183, Asn229, Asn296, Asn306, Asn346, and Asn362. The tract at residues 54–87 (QEQGKTTNNKSKDSPTKSESPSPKPPSSAAQTVK) is disordered. The pectinesterase inhibitor 45 stretch occupies residues 89-241 (GQVDKIIQTL…QVLTSNSLAM (153 aa)). The segment at 296 to 593 (NATVAKDGSG…FTVGPFLQGE (298 aa)) is pectinesterase 45. Substrate-binding residues include Thr371 and Gln401. The active-site Proton donor; for pectinesterase activity is the Asp424. A disulfide bridge links Cys438 with Cys458. The Nucleophile; for pectinesterase activity role is filled by Asp445. N-linked (GlcNAc...) asparagine glycosylation occurs at Asn491. Substrate is bound by residues Arg513 and Trp515.

It in the N-terminal section; belongs to the PMEI family. The protein in the C-terminal section; belongs to the pectinesterase family. In terms of tissue distribution, expressed in flower buds and pollen.

The protein resides in the membrane. It catalyses the reaction [(1-&gt;4)-alpha-D-galacturonosyl methyl ester](n) + n H2O = [(1-&gt;4)-alpha-D-galacturonosyl](n) + n methanol + n H(+). It participates in glycan metabolism; pectin degradation; 2-dehydro-3-deoxy-D-gluconate from pectin: step 1/5. Acts in the modification of cell walls via demethylesterification of cell wall pectin. The sequence is that of Putative pectinesterase/pectinesterase inhibitor 45 (PME45) from Arabidopsis thaliana (Mouse-ear cress).